A 131-amino-acid polypeptide reads, in one-letter code: Global transcriptional regulator Spx (131 aa).

A disulfide bridge connects residues cysteine 10 and cysteine 13.

This sequence belongs to the ArsC family. Spx subfamily. Interacts with the C-terminal domain of the alpha subunit of the RNAP.

It is found in the cytoplasm. Its function is as follows. Global transcriptional regulator that plays a key role in stress response and exerts either positive or negative regulation of genes. Acts by interacting with the C-terminal domain of the alpha subunit of the RNA polymerase (RNAP). This interaction can enhance binding of RNAP to the promoter region of target genes and stimulate their transcription, or block interaction of RNAP with activator. The sequence is that of Global transcriptional regulator Spx from Staphylococcus epidermidis (strain ATCC 35984 / DSM 28319 / BCRC 17069 / CCUG 31568 / BM 3577 / RP62A).